Reading from the N-terminus, the 328-residue chain is Phosphate acyltransferase (328 aa).

It belongs to the PlsX family. Homodimer. Probably interacts with PlsY.

Its subcellular location is the cytoplasm. The enzyme catalyses a fatty acyl-[ACP] + phosphate = an acyl phosphate + holo-[ACP]. It participates in lipid metabolism; phospholipid metabolism. Its function is as follows. Catalyzes the reversible formation of acyl-phosphate (acyl-PO(4)) from acyl-[acyl-carrier-protein] (acyl-ACP). This enzyme utilizes acyl-ACP as fatty acyl donor, but not acyl-CoA. The protein is Phosphate acyltransferase of Campylobacter jejuni subsp. doylei (strain ATCC BAA-1458 / RM4099 / 269.97).